The chain runs to 322 residues: Phosphatidylserine decarboxylase proenzyme (322 aa).

Catalysis depends on charge relay system; for autoendoproteolytic cleavage activity residues Asp90, His147, and Ser254. Residue Ser254 is the Schiff-base intermediate with substrate; via pyruvic acid; for decarboxylase activity of the active site. Ser254 is subject to Pyruvic acid (Ser); by autocatalysis. The segment at 293–322 is disordered; the sequence is PDAEPAPLPAEEIEAEHDASPLIDDKKDQV. Residues 308-322 are compositionally biased toward basic and acidic residues; it reads EHDASPLIDDKKDQV.

This sequence belongs to the phosphatidylserine decarboxylase family. PSD-B subfamily. Prokaryotic type I sub-subfamily. Heterodimer of a large membrane-associated beta subunit and a small pyruvoyl-containing alpha subunit. Pyruvate is required as a cofactor. Post-translationally, is synthesized initially as an inactive proenzyme. Formation of the active enzyme involves a self-maturation process in which the active site pyruvoyl group is generated from an internal serine residue via an autocatalytic post-translational modification. Two non-identical subunits are generated from the proenzyme in this reaction, and the pyruvate is formed at the N-terminus of the alpha chain, which is derived from the carboxyl end of the proenzyme. The autoendoproteolytic cleavage occurs by a canonical serine protease mechanism, in which the side chain hydroxyl group of the serine supplies its oxygen atom to form the C-terminus of the beta chain, while the remainder of the serine residue undergoes an oxidative deamination to produce ammonia and the pyruvoyl prosthetic group on the alpha chain. During this reaction, the Ser that is part of the protease active site of the proenzyme becomes the pyruvoyl prosthetic group, which constitutes an essential element of the active site of the mature decarboxylase.

It is found in the cell membrane. The enzyme catalyses a 1,2-diacyl-sn-glycero-3-phospho-L-serine + H(+) = a 1,2-diacyl-sn-glycero-3-phosphoethanolamine + CO2. The protein operates within phospholipid metabolism; phosphatidylethanolamine biosynthesis; phosphatidylethanolamine from CDP-diacylglycerol: step 2/2. Its function is as follows. Catalyzes the formation of phosphatidylethanolamine (PtdEtn) from phosphatidylserine (PtdSer). The sequence is that of Phosphatidylserine decarboxylase proenzyme from Escherichia coli O127:H6 (strain E2348/69 / EPEC).